The primary structure comprises 264 residues: Thymidylate synthase (264 aa).

Arginine 21 contacts dUMP. (6R)-5,10-methylene-5,6,7,8-tetrahydrofolate is bound at residue histidine 51. 126–127 (RR) is a binding site for dUMP. Cysteine 146 (nucleophile) is an active-site residue. DUMP-binding positions include 166–169 (RSGD), asparagine 177, and 207–209 (HLY). Aspartate 169 provides a ligand contact to (6R)-5,10-methylene-5,6,7,8-tetrahydrofolate. Alanine 263 provides a ligand contact to (6R)-5,10-methylene-5,6,7,8-tetrahydrofolate.

The protein belongs to the thymidylate synthase family. Bacterial-type ThyA subfamily. As to quaternary structure, homodimer.

It localises to the cytoplasm. It catalyses the reaction dUMP + (6R)-5,10-methylene-5,6,7,8-tetrahydrofolate = 7,8-dihydrofolate + dTMP. Its pathway is pyrimidine metabolism; dTTP biosynthesis. Catalyzes the reductive methylation of 2'-deoxyuridine-5'-monophosphate (dUMP) to 2'-deoxythymidine-5'-monophosphate (dTMP) while utilizing 5,10-methylenetetrahydrofolate (mTHF) as the methyl donor and reductant in the reaction, yielding dihydrofolate (DHF) as a by-product. This enzymatic reaction provides an intracellular de novo source of dTMP, an essential precursor for DNA biosynthesis. In Xanthomonas campestris pv. campestris (strain 8004), this protein is Thymidylate synthase.